Consider the following 129-residue polypeptide: ATP synthase epsilon chain (129 aa).

It belongs to the ATPase epsilon chain family. As to quaternary structure, F-type ATPases have 2 components, CF(1) - the catalytic core - and CF(0) - the membrane proton channel. CF(1) has five subunits: alpha(3), beta(3), gamma(1), delta(1), epsilon(1). CF(0) has three main subunits: a, b and c.

It is found in the cell inner membrane. Functionally, produces ATP from ADP in the presence of a proton gradient across the membrane. The protein is ATP synthase epsilon chain of Campylobacter jejuni subsp. doylei (strain ATCC BAA-1458 / RM4099 / 269.97).